The chain runs to 212 residues: Deoxyribose-phosphate aldolase (212 aa).

D89 serves as the catalytic Proton donor/acceptor. K151 functions as the Schiff-base intermediate with acetaldehyde in the catalytic mechanism. Residue K180 is the Proton donor/acceptor of the active site.

Belongs to the DeoC/FbaB aldolase family. DeoC type 1 subfamily.

It localises to the cytoplasm. The catalysed reaction is 2-deoxy-D-ribose 5-phosphate = D-glyceraldehyde 3-phosphate + acetaldehyde. The protein operates within carbohydrate degradation; 2-deoxy-D-ribose 1-phosphate degradation; D-glyceraldehyde 3-phosphate and acetaldehyde from 2-deoxy-alpha-D-ribose 1-phosphate: step 2/2. Catalyzes a reversible aldol reaction between acetaldehyde and D-glyceraldehyde 3-phosphate to generate 2-deoxy-D-ribose 5-phosphate. The chain is Deoxyribose-phosphate aldolase from Clostridium botulinum (strain ATCC 19397 / Type A).